A 264-amino-acid chain; its full sequence is Apolipoprotein A-I (264 aa).

The N-terminal stretch at 1 to 18 (MKAVVLAVAVLFLTGSQA) is a signal peptide. A run of 2 repeats spans residues 67–88 (LNLL…EQLG) and 89–110 (HVSQ…EEMN). The interval 67-264 (LNLLENWDTL…DQITKHVTTQ (198 aa)) is 10 X approximate tandem repeats. Met109 is modified (methionine sulfoxide). The 3; half-length repeat unit spans residues 111–121 (KDLEKVKKKVQ). Tandem repeats lie at residues 122–143 (PFLD…HKVE), 144–165 (PLSL…EKLG), and 166–187 (PLGK…SHLR). The 7; truncated repeat unit spans residues 188–207 (TYTEEMGQILAERLGAIKES). Met193 bears the Methionine sulfoxide mark. Repeat 8 spans residues 208-229 (TSLAEYQTKASEHLRTFSKKAK). The stretch at 230 to 240 (PILEDLRQGLL) is one 9; half-length repeat. Copy 10 of the repeat occupies 241 to 264 (PVAENFKTNIKNTFDQITKHVTTQ).

This sequence belongs to the apolipoprotein A1/A4/E family. As to quaternary structure, homodimer. Interacts with APOA1BP and CLU. Component of a sperm activating protein complex (SPAP), consisting of APOA1, an immunoglobulin heavy chain, an immunoglobulin light chain and albumin. Interacts with NDRG1. Interacts with SCGB3A2. Interacts with NAXE and YJEFN3. Glycosylated. Post-translationally, palmitoylated. In terms of processing, phosphorylation sites are present in the extracellular medium.

It is found in the secreted. In terms of biological role, participates in the reverse transport of cholesterol from tissues to the liver for excretion by promoting cholesterol efflux from tissues and by acting as a cofactor for the lecithin cholesterol acyltransferase (LCAT). As part of the SPAP complex, activates spermatozoa motility. In Fukomys damarensis (Damaraland mole rat), this protein is Apolipoprotein A-I (Apoa1).